Consider the following 189-residue polypeptide: Marginal zone B- and B1-cell-specific protein (189 aa).

Residues 1 to 22 form the signal peptide; it reads MRLSLPLLLLLLGAWAIPGGLG. 3 cysteine pairs are disulfide-bonded: Cys50–Cys178, Cys53–Cys171, and Cys95–Cys143. The Prevents secretion from ER signature appears at 186–189; sequence REEL.

This sequence belongs to the MZB1 family. As to quaternary structure, part of the ER chaperone complex, a multi-protein complex in the endoplasmic reticulum containing a large number of molecular chaperones which associates with unassembled incompletely folded immunoglobulin heavy chains. Isoform 2 interacts with CASP2 and CASP9. Interacts with HSP90B1 and PDIA3 in a calcium-dependent manner. Forms an interchain disulfide bond with IgM monomers. As to expression, widely expressed with highest levels in adult brain, small intestine and lymphoid tissues such as thymus and spleen. Expression is frequently lower in intestinal-type gastric cancer. In obese patients, more abundant in omental than in subcutaneous fat.

The protein localises to the endoplasmic reticulum lumen. It localises to the secreted. The protein resides in the cytoplasm. Functionally, associates with immunoglobulin M (IgM) heavy and light chains and promotes IgM assembly and secretion. May exert its effect by acting as a molecular chaperone or as an oxidoreductase as it displays a low level of oxidoreductase activity. Isoform 2 may be involved in regulation of apoptosis. Helps to diversify peripheral B-cell functions by regulating Ca(2+) stores, antibody secretion and integrin activation. In terms of biological role, acts as a hormone-regulated adipokine/pro-inflammatory cytokine that is implicated in causing chronic inflammation, affecting cellular expansion and blunting insulin response in adipocytes. May have a role in the onset of insulin resistance. This is Marginal zone B- and B1-cell-specific protein (MZB1) from Homo sapiens (Human).